The chain runs to 173 residues: MNLQTIENFEQFLKVNDKQRIVTNSRHIATVFGKRHDNIIRDIKALVIEQDCGEFALLNFEETSYFDEWGRKQPMYQMTKNGFLLLVMGYRTQKAMKFKVEFIKAFDFMREKLQQEGYSLMHKYNELCIEHKAKKAFASLCGKGLREWKGDKPVLEATLKLFEDKMQIELPIK.

This is an uncharacterized protein from Haemophilus influenzae (strain ATCC 51907 / DSM 11121 / KW20 / Rd).